We begin with the raw amino-acid sequence, 445 residues long: Glycine betaine monooxygenase oxygenase subunit (445 aa).

Residues 73-180 (WLFVGMTCEI…VTHAGGFLFV (108 aa)) enclose the Rieske domain. [2Fe-2S] cluster-binding residues include C115, H117, C135, and H138. The Fe cation site is built by H234 and H239.

The protein belongs to the bacterial ring-hydroxylating dioxygenase alpha subunit family. As to quaternary structure, homotrimer. The system is composed of an oxygenase subunit (BmoA) and a reductase subunit (BmoB). Maximal specific activity is obtained when the ratio of BmoA to BmoB is 5:1. [2Fe-2S] cluster serves as cofactor. Fe cation is required as a cofactor.

The enzyme catalyses glycine betaine + NADH + O2 + H(+) = N,N-dimethylglycine + formaldehyde + NAD(+) + H2O. Activity is absolutely dependent on the presence of BmoB. Glycine betaine monooxygenase activity is significantly enhanced by Fe(2+) and severely inhibited by heavy-metal ions, including Co(2+), Mn(2+), Zn(2+), Cu(2+) and Ag(+). Severely inhibited by EDTA. Functionally, involved in degradation of glycine betaine. Part of a Rieske-type oxygenase system that catalyzes the conversion of glycine betaine (GB) to dimethylglycine (DMG). This subunit is the terminal oxygenase component of the system. Is specific for GB, and does not show any activity on choline, L-carnitine, stachydrine, dimethylglycine or sarcosine. Activity is strictly dependent on NADH. The chain is Glycine betaine monooxygenase oxygenase subunit from Chromohalobacter salexigens (strain ATCC BAA-138 / DSM 3043 / CIP 106854 / NCIMB 13768 / 1H11).